The primary structure comprises 374 residues: Glutamate 5-kinase (374 aa).

Residue K16 coordinates ATP. 3 residues coordinate substrate: S56, D143, and N155. ATP-binding positions include 175–176 and 217–223; these read TD and SGGMLTK. The PUA domain maps to 282 to 360; it reads RGALILDDGA…SNIGAILGYK (79 aa).

This sequence belongs to the glutamate 5-kinase family.

It is found in the cytoplasm. It carries out the reaction L-glutamate + ATP = L-glutamyl 5-phosphate + ADP. It functions in the pathway amino-acid biosynthesis; L-proline biosynthesis; L-glutamate 5-semialdehyde from L-glutamate: step 1/2. Functionally, catalyzes the transfer of a phosphate group to glutamate to form L-glutamate 5-phosphate. The protein is Glutamate 5-kinase of Marinomonas sp. (strain MWYL1).